Consider the following 502-residue polypeptide: 2,3-bisphosphoglycerate-independent phosphoglycerate mutase (502 aa).

The Mn(2+) site is built by aspartate 12 and serine 62. Serine 62 (phosphoserine intermediate) is an active-site residue. Residues histidine 123, arginine 152–aspartate 153, arginine 183, arginine 189, arginine 255–arginine 258, and lysine 329 contribute to the substrate site. 5 residues coordinate Mn(2+): aspartate 394, histidine 398, aspartate 435, histidine 436, and histidine 453.

Belongs to the BPG-independent phosphoglycerate mutase family. In terms of assembly, monomer. Mn(2+) serves as cofactor.

It catalyses the reaction (2R)-2-phosphoglycerate = (2R)-3-phosphoglycerate. It participates in carbohydrate degradation; glycolysis; pyruvate from D-glyceraldehyde 3-phosphate: step 3/5. In terms of biological role, catalyzes the interconversion of 2-phosphoglycerate and 3-phosphoglycerate. This is 2,3-bisphosphoglycerate-independent phosphoglycerate mutase from Malacoplasma penetrans (strain HF-2) (Mycoplasma penetrans).